The chain runs to 215 residues: Adenylate kinase (215 aa).

10–15 (GAGKGT) contributes to the ATP binding site. The segment at 30–59 (STGDMLRAAVKAGTPIGLKAKAVMEAGELV) is NMP. AMP is bound by residues threonine 31, arginine 36, 57–59 (ELV), 85–88 (GYPR), and glutamine 92. The segment at 126–163 (GRYTCANCGEGYHDRFKQPKVAGVCDVCGSAEFKRRPD) is LID. Residue arginine 127 coordinates ATP. 4 residues coordinate Zn(2+): cysteine 130, cysteine 133, cysteine 150, and cysteine 153. The AMP site is built by arginine 160 and arginine 172. An ATP-binding site is contributed by alanine 200.

Belongs to the adenylate kinase family. Monomer.

It localises to the cytoplasm. It catalyses the reaction AMP + ATP = 2 ADP. It functions in the pathway purine metabolism; AMP biosynthesis via salvage pathway; AMP from ADP: step 1/1. In terms of biological role, catalyzes the reversible transfer of the terminal phosphate group between ATP and AMP. Plays an important role in cellular energy homeostasis and in adenine nucleotide metabolism. The polypeptide is Adenylate kinase (Rhizorhabdus wittichii (strain DSM 6014 / CCUG 31198 / JCM 15750 / NBRC 105917 / EY 4224 / RW1) (Sphingomonas wittichii)).